Consider the following 1845-residue polypeptide: Proteasome activator complex subunit 4 (1845 aa).

The segment covering 1-13 (MEPAERAGGRDPL) has biased composition (basic and acidic residues). Residues 1-26 (MEPAERAGGRDPLEPGGRPGPDPQGF) form a disordered region. HEAT repeat units lie at residues 475–519 (PEGP…LVDC) and 1000–1039 (NFCC…NHSG). Ser-1123 is modified (phosphoserine). HEAT repeat units follow at residues 1181 to 1219 (RVLP…QLKR) and 1356 to 1394 (DAFL…GSKH). Ser-1616 carries the post-translational modification Phosphoserine. HEAT repeat units follow at residues 1638 to 1676 (PHQV…YNLF) and 1682 to 1720 (EDAV…CNFL). Positions 1652–1740 (ARSSSWHARY…EQLCKTKLPK (89 aa)) are bromodomain-like (BRDL).

Belongs to the BLM10 family. As to quaternary structure, homodimer. Component of the spermatoproteasome, a form of the proteasome specifically found in testis. Interacts with the 20S and 26S proteasomes. Post-translationally, phosphorylated.

Its subcellular location is the cytoplasm. The protein localises to the cytosol. It localises to the nucleus. It is found in the nucleus speckle. Functionally, associated component of the proteasome that specifically recognizes acetylated histones and promotes ATP- and ubiquitin-independent degradation of core histones during spermatogenesis and DNA damage response. Recognizes and binds acetylated histones via its bromodomain-like (BRDL) region and activates the proteasome by opening the gated channel for substrate entry. Binds to the core proteasome via its C-terminus, which occupies the same binding sites as the proteasomal ATPases, opening the closed structure of the proteasome via an active gating mechanism. Component of the spermatoproteasome, a form of the proteasome specifically found in testis: binds to acetylated histones and promotes degradation of histones, thereby participating actively to the exchange of histones during spermatogenesis. Also involved in DNA damage response in somatic cells, by promoting degradation of histones following DNA double-strand breaks. This is Proteasome activator complex subunit 4 (PSME4) from Bos taurus (Bovine).